We begin with the raw amino-acid sequence, 622 residues long: Membrane protein insertase YidC (622 aa).

A helical transmembrane segment spans residues Ile-6–Glu-26. The disordered stretch occupies residues Thr-47–Arg-87. A compositionally biased stretch (polar residues) spans Leu-62–Ser-83. 3 consecutive transmembrane segments (helical) span residues Trp-381–Ala-401, Phe-451–Val-471, and Pro-525–Val-545. The interval Thr-563–Lys-622 is disordered. Residues Val-583 to Ala-596 show a composition bias toward polar residues. Positions Arg-613–Lys-622 are enriched in basic residues.

It belongs to the OXA1/ALB3/YidC family. Type 1 subfamily. In terms of assembly, interacts with the Sec translocase complex via SecD. Specifically interacts with transmembrane segments of nascent integral membrane proteins during membrane integration.

The protein localises to the cell inner membrane. In terms of biological role, required for the insertion and/or proper folding and/or complex formation of integral membrane proteins into the membrane. Involved in integration of membrane proteins that insert both dependently and independently of the Sec translocase complex, as well as at least some lipoproteins. Aids folding of multispanning membrane proteins. The protein is Membrane protein insertase YidC of Nitrosomonas eutropha (strain DSM 101675 / C91 / Nm57).